The sequence spans 159 residues: Large ribosomal subunit protein uL10 (159 aa).

It belongs to the universal ribosomal protein uL10 family. As to quaternary structure, part of the ribosomal stalk of the 50S ribosomal subunit. The N-terminus interacts with L11 and the large rRNA to form the base of the stalk. The C-terminus forms an elongated spine to which L12 dimers bind in a sequential fashion forming a multimeric L10(L12)X complex.

In terms of biological role, forms part of the ribosomal stalk, playing a central role in the interaction of the ribosome with GTP-bound translation factors. The protein is Large ribosomal subunit protein uL10 (rplJ) of Campylobacter jejuni subsp. jejuni serotype O:2 (strain ATCC 700819 / NCTC 11168).